Consider the following 380-residue polypeptide: DNA replication and repair protein RecF (380 aa).

30-37 (GPNGFGKT) contacts ATP.

It belongs to the RecF family.

The protein resides in the cytoplasm. Its function is as follows. The RecF protein is involved in DNA metabolism; it is required for DNA replication and normal SOS inducibility. RecF binds preferentially to single-stranded, linear DNA. It also seems to bind ATP. This is DNA replication and repair protein RecF from Mycobacterium sp. (strain JLS).